The sequence spans 741 residues: MEHTYQYAWIIPLLPLTVTMLIGLGLLLFPIATKNLRRMWAVPSVLFLSIGMLLSVELAIQQINQSSVYKYLWSWTINNDFSLEFGYLIDPLTSIMSILITTVGILVLIYSDNYMSHDQGYLRFFSYLSFFNASMLGLVTSSNLIQIYIFWELVGMCSYLLIGFWFARPIAANACQKAFVTNRVGDFGLLLGILGLYWITGSFEFRDLFELCNNLIPNNGVNSLFATLCAFLLFLGAVAKSAQFPLHVWLPDAMEGPTPISALIHAATMVAAGIFLVARLLPLFIVIPYIMNLISLIGVITLLLGATLALSQRDIKRSLAYSTMSQLGYIMLAPGIGSYRTALFHLITHAYSKALLFLGSGSIIHSMEPIVGYSPEKSQNMALMGGLTKYVPITKTTFFWGTLSLCGIPPLACFWSKDEILHDSWLYSPIFAIIAYATAGLTAFYMFRMYLLTFDGYLRIHFKKYSGNKKGSFYSISIWGQKELKPVNSNFLLSTVNNNEKVSFFSTKTSQIDGNVRPLMHSLSIHFSNLSKKDIFTYPHESDNTMLLPLLLLGLFTWFVGLIGIPFNQEEEGFDILSKWLIPPINLLHQNSSSPVDWYEFITNSILSVSISVFGIFTASLLYGSVYSSFKNMELINSVVKISPKRSLLDRIINVIYNWSCNRGYIDVFYARSLTMMIRGLAQLTHFFDRRVIDGITNGFGIVSFFVGEGIKYAGGGRISSYIFYYSSYVLIFVLIFYFFI.

Transmembrane regions (helical) follow at residues 9-29 (WIIP…LLLF), 40-60 (WAVP…ELAI), 89-109 (IDPL…LVLI), 125-145 (FSYL…SNLI), 147-167 (IYIF…FWFA), 185-205 (GDFG…SFEF), 219-239 (NGVN…GAVA), 258-278 (TPIS…FLVA), 280-300 (LLPL…IGVI), 327-347 (LGYI…FHLI), 396-416 (TTFF…CFWS), 425-445 (WLYS…TAFY), 547-567 (LLPL…GIPF), 606-626 (ILSV…YGSV), and 721-741 (SYIF…YFFI).

It belongs to the complex I subunit 5 family. NDH is composed of at least 16 different subunits, 5 of which are encoded in the nucleus.

It is found in the plastid. Its subcellular location is the chloroplast thylakoid membrane. It carries out the reaction a plastoquinone + NADH + (n+1) H(+)(in) = a plastoquinol + NAD(+) + n H(+)(out). It catalyses the reaction a plastoquinone + NADPH + (n+1) H(+)(in) = a plastoquinol + NADP(+) + n H(+)(out). Functionally, NDH shuttles electrons from NAD(P)H:plastoquinone, via FMN and iron-sulfur (Fe-S) centers, to quinones in the photosynthetic chain and possibly in a chloroplast respiratory chain. The immediate electron acceptor for the enzyme in this species is believed to be plastoquinone. Couples the redox reaction to proton translocation, and thus conserves the redox energy in a proton gradient. The protein is NAD(P)H-quinone oxidoreductase subunit 5, chloroplastic (ndhF) of Ceratophyllum demersum (Rigid hornwort).